The sequence spans 803 residues: MDDWKSRLVIENMLPHFNMVGNRQETRKLQESGTSKRRQEGENFHFTGMADGSYPNKIKRPCLEDVTLSMGPGAHPTSLSTEMQMPTLNMNPTSADLGVAGQSLLLENNPLDSNVVNSSAMGSPFGVPSTADTGLKGHAVPYYEKNNSMPAVDQELQDLLEELTKIQEPSSNDLDLEKILGSKPEEPLVLHNPQAPLGPPAKLPVQMPHMESLGSSKEFASSCSQVAGTSLPIMPSSTGMSYSIPSSSKQIVSSSSSTAQAQVKNQVQNMLPVTMPPLSVPQWHHAHQLKALAASKQGSATKQGSNRNWSSLPPPGLSPPYLPVPSPHPPPPQPPPPPFSPQNFTASCMSSSSLSGSAVQSSPNALLSSMAPSSNASLGPTLPYVPAKLPGLPLNQQPQFSPQSSILANLVSSSVKSPQGHLISALPTSTPGPSPPYRPENLSSPGLPQQSFTPQYSLIRSLTPTSNLLSQQQQQQQQQQQQQQQQQQQQQQQQHQANSIFKPMTSSQQPKTLSMIMQQGLSSSSPEAPEPFTFSNTKPLSHFVSEPSPQKMASMSTHSRQSSLLHYLPQATPAHAPSATASSTATATLQLQHHHQQHHHQQHHHQQQHHQQQHHQQHHHQQQQHQQQQHQQQQQQQPDQSSFLLQQIMQQPQRFQRMMASDSMPALPGQGCCHRCAWTSTALWLEHQHQQWNSLTSTHGHVPPSNLTHVDKACKLGEARPPHVSLGRQPPSRQALGSESFLPGSSFAHELARVTSTSSYNTSEAAPWGGWDPKAWRQVPAPLLPSCDAAAREAEIRSYGNDP.

Disordered regions lie at residues 22–50, 292–374, 420–452, and 486–641; these read NRQETRKLQESGTSKRRQEGENFHFTGMA, LAAS…APSS, GHLISALPTSTPGPSPPYRPENLSSPGLPQQSF, and QQQQ…PDQS. Residues 296–309 are compositionally biased toward polar residues; it reads KQGSATKQGSNRNW. Over residues 312-340 the composition is skewed to pro residues; that stretch reads LPPPGLSPPYLPVPSPHPPPPQPPPPPFS. Positions 347–362 are enriched in low complexity; it reads SCMSSSSLSGSAVQSS. Composition is skewed to polar residues over residues 363–374, 441–452, 495–526, and 547–564; these read PNALLSSMAPSS, NLSSPGLPQQSF, HQANSIFKPMTSSQQPKTLSMIMQQGLSSSSP, and PSPQKMASMSTHSRQSSL. Residues 571–588 are compositionally biased toward low complexity; it reads ATPAHAPSATASSTATAT. Residues 592–622 are compositionally biased toward basic residues; the sequence is QHHHQQHHHQQHHHQQQHHQQQHHQQHHHQQ. A compositionally biased stretch (low complexity) spans 623-641; sequence QQHQQQQHQQQQQQQPDQS.

The protein belongs to the mastermind family.

It localises to the nucleus. Its function is as follows. Transactivates the HES3 promoter independently of NOTCH proteins. HES3 is a non-canonical NOTCH target gene which lacks binding sites for RBPJ. Required for testosterone production. The polypeptide is Mastermind-like domain-containing protein 1 (Mamld1) (Mus musculus (Mouse)).